Here is a 326-residue protein sequence, read N- to C-terminus: Microtubule-associated protein RP/EB family member 2 (326 aa).

The residue at position 9 (S9) is a Phosphoserine. Residues 56-158 (TMSRHDIIAW…FIQWFKKFYD (103 aa)) form the Calponin-homology (CH) domain. Y166 is modified (phosphotyrosine). Disordered regions lie at residues 170–239 (EARQ…DKDL) and 297–326 (YASDEQEGQTEEPEVEEQTHDQQPQQQEEY). The interval 186 to 326 (QIFNLPKKSH…DQQPQQQEEY (141 aa)) is DCTN1-binding. The segment covering 199 to 233 (SPTAGAAKSSPAAKPGSTPSRPSSAKRASSSGSAS) has biased composition (low complexity). S218 and S235 each carry phosphoserine. One can recognise an EB1 C-terminal domain in the interval 235–305 (SDKDLETQVI…LYASDEQEGQ (71 aa)). The tract at residues 258–301 (EGVEKERDFYFGKLREIELLCQEHGQENDDLVQRLMEVLYASDE) is APC-binding. Residues 300-312 (DEQEGQTEEPEVE) show a composition bias toward acidic residues. Positions 317–326 (DQQPQQQEEY) are enriched in low complexity.

This sequence belongs to the MAPRE family. As to quaternary structure, interacts with DCTN1. Interacts with APC (via C-terminal). Interacts with monomeric and polymerized tubulin. Interacts with SLAIN1. Interacts (via the N-terminal region) with BAG1. Interacts with ASB14. Interacts with HAX1; this interaction is essential for epidermal cell migration. Phosphorylated at Ser-235 by CK2 leading to enhanced cell adhesion. Phosphorylated by CDK1 and AURKB during mitosis reduces the binding affinity of MAPRE2 for microtubules. Post-translationally, ubiquitinated in an ASB14-dependent manner; leading to proteasomal degradation.

The protein localises to the cytoplasm. It localises to the cytoskeleton. Its function is as follows. Adapter protein that is involved in microtubule polymerization, and spindle function by stabilizing microtubules and anchoring them at centrosomes. Therefore, ensures mitotic progression and genome stability. Acts as a central regulator of microtubule reorganization in apico-basal epithelial differentiation. Plays a role during oocyte meiosis by regulating microtubule dynamics. Participates in neurite growth by interacting with plexin B3/PLXNB3 and microtubule reorganization during apico-basal epithelial differentiation. Also plays an essential role for cell migration and focal adhesion dynamics. Mechanistically, recruits HAX1 to microtubules in order to regulate focal adhesion dynamics. In Rattus norvegicus (Rat), this protein is Microtubule-associated protein RP/EB family member 2 (Mapre2).